The chain runs to 241 residues: E3 ubiquitin-protein ligase RNF166 (241 aa).

A disordered region spans residues 8–30; the sequence is VASSQHRQHHSHQSLATPSSADS. Residues 37–77 form an RING-type zinc finger; sequence CPICLEVYYKPVAIGSCGHTFCGECLQPCLQVSSPLCPLCR. Residues Cys-102, Cys-105, His-117, and Cys-121 each contribute to the Zn(2+) site. The C2HC RNF-type zinc finger occupies 102–121; that stretch reads CRGCSKKVTLAKMRAHISSC. In terms of domain architecture, UIM spans 225-241; it reads DEEAALQAALALSLSEN.

It is found in the cytoplasm. The enzyme catalyses S-ubiquitinyl-[E2 ubiquitin-conjugating enzyme]-L-cysteine + [acceptor protein]-L-lysine = [E2 ubiquitin-conjugating enzyme]-L-cysteine + N(6)-ubiquitinyl-[acceptor protein]-L-lysine.. It participates in protein modification; protein ubiquitination. Functionally, E3 ubiquitin-protein ligase that promotes the ubiquitination of different substrates. This Xenopus laevis (African clawed frog) protein is E3 ubiquitin-protein ligase RNF166 (rnf166).